The sequence spans 582 residues: Phosphoglucomutase, cytoplasmic (582 aa).

Residues arginine 25 and serine 124 each coordinate alpha-D-glucose 1,6-bisphosphate. Residue serine 124 is the Phosphoserine intermediate of the active site. The Mg(2+) site is built by serine 124, aspartate 299, aspartate 301, and aspartate 303. Serine 124 carries the post-translational modification Phosphoserine. The alpha-D-glucose 1,6-bisphosphate site is built by aspartate 303, arginine 304, threonine 367, glutamate 386, serine 388, and lysine 399.

Belongs to the phosphohexose mutase family. Monomer. The cofactor is Mg(2+).

It localises to the cytoplasm. It catalyses the reaction alpha-D-glucose 1-phosphate = alpha-D-glucose 6-phosphate. The enzyme catalyses O-phospho-L-seryl-[protein] + alpha-D-glucose 1-phosphate = alpha-D-glucose 1,6-bisphosphate + L-seryl-[protein]. The catalysed reaction is alpha-D-glucose 1,6-bisphosphate + L-seryl-[protein] = O-phospho-L-seryl-[protein] + alpha-D-glucose 6-phosphate. Its function is as follows. Catalyzes the reversible isomerization of alpha-D-glucose 1-phosphate to alpha-D-glucose 6-phosphate. The mechanism proceeds via the intermediate compound alpha-D-glucose 1,6-bisphosphate. This enzyme participates in both the breakdown and synthesis of glucose. This is Phosphoglucomutase, cytoplasmic (PGM1) from Populus tremula (European aspen).